A 616-amino-acid chain; its full sequence is Chaperone protein DnaK (616 aa).

Phosphothreonine; by autocatalysis is present on T174. The segment at Q576–T616 is disordered. The span at G583–G593 shows a compositional bias: gly residues.

The protein belongs to the heat shock protein 70 family.

Its function is as follows. Acts as a chaperone. The chain is Chaperone protein DnaK from Heliobacterium modesticaldum (strain ATCC 51547 / Ice1).